Reading from the N-terminus, the 455-residue chain is Argininosuccinate lyase (455 aa).

The protein belongs to the lyase 1 family. Argininosuccinate lyase subfamily.

Its subcellular location is the cytoplasm. It catalyses the reaction 2-(N(omega)-L-arginino)succinate = fumarate + L-arginine. It participates in amino-acid biosynthesis; L-arginine biosynthesis; L-arginine from L-ornithine and carbamoyl phosphate: step 3/3. This Shewanella baltica (strain OS155 / ATCC BAA-1091) protein is Argininosuccinate lyase.